A 258-amino-acid polypeptide reads, in one-letter code: uncharacterized protein (258 aa).

The signal sequence occupies residues 1 to 20 (MKCFQKLYIFILILIVLMAG). The N-palmitoyl cysteine moiety is linked to residue C21. Residue C21 is the site of S-diacylglycerol cysteine attachment.

The protein belongs to the staphylococcal tandem lipoprotein family.

It localises to the cell membrane. This is an uncharacterized protein from Staphylococcus aureus (strain COL).